A 215-amino-acid chain; its full sequence is MKTVLLTGFDPFGGESINPAWEVAKSLHEKTIGEYKIISKQVPTVFHKSISVLKEYIEELAPECIICIGQAGGRPDITIERVAINIDDARIADNEGNQPVDVPVVEEGPAAYWSTLPMKAIVKKLQEEGIPASVSQTAGTFVCNHLFYGLMHELEKHDTKMKGGFIHIPFLPEQASNYPGQPSMSLSTIRKGIELAVEVTTTVEVDIVEIGGATH.

Active-site residues include glutamate 80, cysteine 143, and histidine 167.

Belongs to the peptidase C15 family. In terms of assembly, homotetramer.

It is found in the cytoplasm. It catalyses the reaction Release of an N-terminal pyroglutamyl group from a polypeptide, the second amino acid generally not being Pro.. In terms of biological role, removes 5-oxoproline from various penultimate amino acid residues except L-proline. This is Pyrrolidone-carboxylate peptidase from Bacillus cereus (strain AH820).